A 207-amino-acid chain; its full sequence is Large ribosomal subunit protein uL3c (207 aa).

Positions 129 to 148 (TRGPMTHGSKNHRAPGSIGM) are disordered.

It belongs to the universal ribosomal protein uL3 family. Part of the 50S ribosomal subunit.

It localises to the plastid. The protein localises to the chloroplast. Its function is as follows. One of the primary rRNA binding proteins, it binds directly near the 3'-end of the 23S rRNA, where it nucleates assembly of the 50S subunit. The chain is Large ribosomal subunit protein uL3c (rpl3) from Phaeodactylum tricornutum (strain CCAP 1055/1).